The primary structure comprises 61 residues: Beta-toxin Tce4 (61 aa).

Residues 1–61 (KEGYLMDHEG…KVWEYATNRC (61 aa)) form the LCN-type CS-alpha/beta domain. 4 cysteine pairs are disulfide-bonded: C11-C61, C15-C37, C23-C42, and C27-C44. Residue C61 is modified to Cysteine amide.

The protein belongs to the long (4 C-C) scorpion toxin superfamily. Sodium channel inhibitor family. Beta subfamily. Expressed by the venom gland.

The protein resides in the secreted. Functionally, beta toxins bind voltage-independently at site-4 of sodium channels (Nav) and shift the voltage of activation toward more negative potentials thereby affecting sodium channel activation and promoting spontaneous and repetitive firing. The protein is Beta-toxin Tce4 of Tityus cerroazul (Scorpion).